We begin with the raw amino-acid sequence, 714 residues long: DNA ligase (714 aa).

Residues 48–52 (DADYD), 97–98 (SL), and glutamate 129 each bind NAD(+). The N6-AMP-lysine intermediate role is filled by lysine 131. Residues arginine 152, glutamate 189, lysine 307, and lysine 331 each coordinate NAD(+). Zn(2+) is bound by residues cysteine 436, cysteine 439, cysteine 454, and cysteine 460. Positions 637 to 714 (KQDTAVAGKT…TEDEWLALIG (78 aa)) constitute a BRCT domain.

It belongs to the NAD-dependent DNA ligase family. LigA subfamily. Mg(2+) is required as a cofactor. Mn(2+) serves as cofactor.

It catalyses the reaction NAD(+) + (deoxyribonucleotide)n-3'-hydroxyl + 5'-phospho-(deoxyribonucleotide)m = (deoxyribonucleotide)n+m + AMP + beta-nicotinamide D-nucleotide.. In terms of biological role, DNA ligase that catalyzes the formation of phosphodiester linkages between 5'-phosphoryl and 3'-hydroxyl groups in double-stranded DNA using NAD as a coenzyme and as the energy source for the reaction. It is essential for DNA replication and repair of damaged DNA. This Rhodopseudomonas palustris (strain BisB5) protein is DNA ligase.